The primary structure comprises 329 residues: Endonuclease 8-like 2 (329 aa).

Residue P2 is the Schiff-base intermediate with DNA of the active site. The active-site Proton donor is the E3. The active-site Proton donor; for beta-elimination activity is the K50. Position 50 is an N6-acetyllysine (K50). S68 carries the phosphoserine modification. The tract at residues 68–116 is disordered; sequence SLLSEPLREGEQKDKARHHQEASDPSSWSPGGDSAVPSGDDGLQCLGGD. Over residues 73-89 the composition is skewed to basic and acidic residues; the sequence is PLREGEQKDKARHHQEA. Positions 90–102 are enriched in low complexity; sequence SDPSSWSPGGDSA. K149 is subject to N6-acetyllysine. N227 contributes to the DNA binding site. The FPG-type zinc finger occupies 280–316; the sequence is QIYQKEQCPAGHQVVRESLGPPGGFQRLTWWCPQCQP. R306 acts as the Proton donor; for delta-elimination activity in catalysis.

Belongs to the FPG family. As to quaternary structure, binds EP300.

It is found in the nucleus. The enzyme catalyses 2'-deoxyribonucleotide-(2'-deoxyribose 5'-phosphate)-2'-deoxyribonucleotide-DNA = a 3'-end 2'-deoxyribonucleotide-(2,3-dehydro-2,3-deoxyribose 5'-phosphate)-DNA + a 5'-end 5'-phospho-2'-deoxyribonucleoside-DNA + H(+). Its activity is regulated as follows. Acetylation of Lys-50 leads to loss of DNA nicking activity. Functionally, involved in base excision repair of DNA damaged by oxidation or by mutagenic agents. Has DNA glycosylase activity towards 5-hydroxyuracil and other oxidized derivatives of cytosine with a preference for mismatched double-stranded DNA (DNA bubbles). Has low or no DNA glycosylase activity towards thymine glycol, 2-hydroxyadenine, hypoxanthine and 8-oxoguanine. Has AP (apurinic/apyrimidinic) lyase activity and introduces nicks in the DNA strand. Cleaves the DNA backbone by beta-delta elimination to generate a single-strand break at the site of the removed base with both 3'- and 5'-phosphates. This Bos taurus (Bovine) protein is Endonuclease 8-like 2 (NEIL2).